Reading from the N-terminus, the 290-residue chain is Pyridoxal kinase PdxY (290 aa).

Residues S12 and 47–48 (TQ) each bind substrate. ATP-binding positions include D114, E151, K184, and 211-214 (RPLL). D225 lines the substrate pocket.

The protein belongs to the pyridoxine kinase family. PdxY subfamily. As to quaternary structure, homodimer. Mg(2+) serves as cofactor.

The catalysed reaction is pyridoxal + ATP = pyridoxal 5'-phosphate + ADP + H(+). Its pathway is cofactor metabolism; pyridoxal 5'-phosphate salvage; pyridoxal 5'-phosphate from pyridoxal: step 1/1. Pyridoxal kinase involved in the salvage pathway of pyridoxal 5'-phosphate (PLP). Catalyzes the phosphorylation of pyridoxal to PLP. In Pseudomonas fluorescens (strain SBW25), this protein is Pyridoxal kinase PdxY.